A 382-amino-acid polypeptide reads, in one-letter code: Pyrimidine monooxygenase RutA (382 aa).

Residues 68–69 (IK), Asn-134, Glu-143, 159–160 (RY), and Ser-209 contribute to the FMN site.

It belongs to the NtaA/SnaA/DszA monooxygenase family. RutA subfamily.

It catalyses the reaction uracil + FMNH2 + NADH + O2 = (Z)-3-ureidoacrylate + FMN + NAD(+) + H2O + H(+). The catalysed reaction is thymine + FMNH2 + NADH + O2 = (Z)-2-methylureidoacrylate + FMN + NAD(+) + H2O + H(+). In terms of biological role, catalyzes the pyrimidine ring opening between N-3 and C-4 by an unusual flavin hydroperoxide-catalyzed mechanism, adding oxygen atoms in the process to yield ureidoacrylate peracid, that immediately reacts with FMN forming ureidoacrylate and FMN-N(5)-oxide. The FMN-N(5)-oxide reacts spontaneously with NADH to produce FMN. Requires the flavin reductase RutF to regenerate FMN in vivo. This is Pyrimidine monooxygenase RutA from Escherichia coli O8 (strain IAI1).